A 327-amino-acid chain; its full sequence is Malate dehydrogenase (327 aa).

11-17 is an NAD(+) binding site; sequence GAAGQIA. Substrate-binding residues include R92 and R98. NAD(+)-binding positions include N105, Q112, and 128 to 130; that span reads VGN. N130 and R160 together coordinate substrate. H185 (proton acceptor) is an active-site residue.

Belongs to the LDH/MDH superfamily. MDH type 2 family.

The catalysed reaction is (S)-malate + NAD(+) = oxaloacetate + NADH + H(+). In terms of biological role, catalyzes the reversible oxidation of malate to oxaloacetate. This chain is Malate dehydrogenase, found in Magnetococcus marinus (strain ATCC BAA-1437 / JCM 17883 / MC-1).